The primary structure comprises 503 residues: Pre-glycoprotein polyprotein GP complex (503 aa).

Residue G2 is the site of N-myristoyl glycine; by host attachment. Residues 2–17 (GQIVTLIQSIPEVLQE) are Extracellular-facing. A helical transmembrane segment spans residues 18–33 (VFNVALIIVSVLCIVK). Topologically, residues 34 to 58 (GFVNLMRCGLFQLVTFLILSGRSCD) are cytoplasmic. Residue C57 coordinates Zn(2+). Residues 59-446 (SMMIDRRHNL…QGKTPLALTD (388 aa)) are Extracellular-facing. 4 disulfide bridges follow: C86–C248, C293–C306, C315–C324, and C378–C399. N89, N111, N181, and N241 each carry an N-linked (GlcNAc...) asparagine; by host glycan. 4 N-linked (GlcNAc...) asparagine; by host glycosylation sites follow: N379, N387, N404, and N409. Residues 447–467 (ICFWSLVFYTITVFLHIVGIP) form a helical membrane-spanning segment. Residues 468 to 503 (THRHIIGDGCPKPHRITRNSLCSCGYYKYQRNLTNG) lie on the Cytoplasmic side of the membrane. Positions 469, 471, 477, 481, 489, and 491 each coordinate Zn(2+).

This sequence belongs to the arenaviridae GPC protein family. As to quaternary structure, interacts with glycoprotein G2. Part of the GP complex (GP-C) together with glycoprotein G1 and glycoprotein G2. The GP-complex interacts with protein Z, which interacts with ribonucleocapsid; these interactions may induce virion budding. Homotrimer; disulfide-linked. In pre-fusion state, G1 homotrimers bind G2 homotrimers via ionic interactions. Part of the GP complex (GP-C) together with glycoprotein G2 and the stable signal peptide. The GP-complex interacts with protein Z, which interacts with ribonucleocapsid; these interactions may induce virion budding. In terms of assembly, homotrimer. Interacts with the stable signal peptide. In pre-fusion state, G2 homotrimers bind G1 homotrimers via ionic interactions. Part of the GP complex (GP-C) together with glycoprotein G1 and the stable signal peptide. Acidification in the endosome triggers rearrangements, which ultimately leads to a 6 helix bundle formed by the two heptad repeat domains (HR1 and HR2) in post-fusion state. The GP-complex interacts with protein Z, which interacts with ribonucleocapsid; these interactions may induce virion budding. Post-translationally, specific enzymatic cleavages in vivo yield mature proteins. GP-C polyprotein is cleaved in the endoplasmic reticulum by the host protease MBTPS1. Only cleaved glycoprotein is incorporated into virions. The SSP remains stably associated with the GP complex following cleavage by signal peptidase and plays crucial roles in the trafficking of GP through the secretory pathway. In terms of processing, myristoylation is necessary for GP2-mediated fusion activity.

Its subcellular location is the virion membrane. It is found in the host endoplasmic reticulum membrane. It localises to the host Golgi apparatus membrane. The protein resides in the host cell membrane. In terms of biological role, functions as a cleaved signal peptide that is retained as the third component of the GP complex (GP-C). Helps to stabilize the spike complex in its native conformation. The SSP is required for efficient glycoprotein expression, post-translational maturation cleavage of G1 and G2, glycoprotein transport to the cell surface plasma membrane, formation of infectious virus particles, and acid pH-dependent glycoprotein-mediated cell fusion. Functionally, forms the virion spikes together with glycoprotein G2. The glycoprotein spike trimers are connected to the underlying matrix. Interacts with the host receptor leading to virus endocytosis. Forms the virion spikes together with glycoprotein G1. The glycoprotein spike trimers are connected to the underlying matrix. Class I viral fusion protein that directs fusion of viral and host endosomal membranes, leading to delivery of the nucleocapsid into the cytoplasm. Membrane fusion is mediated by irreversible conformational changes induced by acidification. In Cavia cutleri (Guinea pig), this protein is Pre-glycoprotein polyprotein GP complex.